The chain runs to 1417 residues: Cytoadherence-linked asexual protein 3.1 (1417 aa).

The N-terminal stretch at 1-24 (MVSFFKTPIFILIIFLYLNEKVIC) is a signal peptide. 4 cysteine pairs are disulfide-bonded: Cys-333–Cys-361, Cys-407–Cys-413, Cys-517–Cys-545, and Cys-521–Cys-542. The chain crosses the membrane as a helical span at residues 1204–1224 (LVNGFMYAFCFFAISQMYAYF). The disordered stretch occupies residues 1383–1417 (TYIDTEKMNEADSADSDDEKDSDTPDDELMISRFH). The segment covering 1394 to 1411 (DSADSDDEKDSDTPDDEL) has biased composition (acidic residues).

In terms of assembly, self-associates. Component of the RhopH complex. RhopH complex is at least composed of CLAG3.1/CLAG3.2, RhopH2 and RhopH3 with a 1:1:1 subunit stoichiometry. CLAG3.1/CLAG3.2 mediates subunit association through independent contacts with RhopH2 and RhopH3, which do not directly interact with one another. Interacts with RhopH2. Interacts with RhopH3.

It is found in the host cell membrane. Its subcellular location is the host cytoplasm. The protein localises to the cytoplasmic vesicle. It localises to the secretory vesicle. The protein resides in the rhoptry. Its function is as follows. Participates in the formation of new permeability pathways in Plasmodium-infected erythrocytes enabling the uptake of nutrients from the blood plasma. This chain is Cytoadherence-linked asexual protein 3.1, found in Plasmodium falciparum (isolate 3D7).